Consider the following 316-residue polypeptide: Pantothenate kinase (316 aa).

95-102 (GSVAVGKS) provides a ligand contact to ATP.

The protein belongs to the prokaryotic pantothenate kinase family.

It localises to the cytoplasm. It catalyses the reaction (R)-pantothenate + ATP = (R)-4'-phosphopantothenate + ADP + H(+). It participates in cofactor biosynthesis; coenzyme A biosynthesis; CoA from (R)-pantothenate: step 1/5. In Enterobacter sp. (strain 638), this protein is Pantothenate kinase.